A 111-amino-acid chain; its full sequence is uncharacterized protein (111 aa).

The protein belongs to the asfivirus E111R family.

This is an uncharacterized protein from Ornithodoros (relapsing fever ticks).